We begin with the raw amino-acid sequence, 254 residues long: Phosphoribosylaminoimidazole-succinocarboxamide synthase (254 aa).

It belongs to the SAICAR synthetase family.

The enzyme catalyses 5-amino-1-(5-phospho-D-ribosyl)imidazole-4-carboxylate + L-aspartate + ATP = (2S)-2-[5-amino-1-(5-phospho-beta-D-ribosyl)imidazole-4-carboxamido]succinate + ADP + phosphate + 2 H(+). It functions in the pathway purine metabolism; IMP biosynthesis via de novo pathway; 5-amino-1-(5-phospho-D-ribosyl)imidazole-4-carboxamide from 5-amino-1-(5-phospho-D-ribosyl)imidazole-4-carboxylate: step 1/2. The polypeptide is Phosphoribosylaminoimidazole-succinocarboxamide synthase (Brucella canis (strain ATCC 23365 / NCTC 10854 / RM-666)).